The primary structure comprises 80 residues: Conotoxin SIVB (80 aa).

The signal sequence occupies residues 1–21 (MGMRMMFTVFLSVVLATTVVS). The propeptide occupies 22 to 38 (TPSDRASDGRNAAVHER). Q39 is subject to Pyrrolidone carboxylic acid. S45 is a glycosylation site (O-linked (HexNAc...) serine). 6 positions are modified to 4-hydroxyproline: P55, P60, P61, P69, P72, and P75. At P75 the chain carries Proline amide. Residues 76 to 80 (GRRND) constitute a propeptide that is removed on maturation.

It belongs to the conotoxin A superfamily. In terms of processing, contains 3 disulfide bonds. Post-translationally, O-linked glycan consists of Hex3-HexNAc2 pentasaccharide. Expressed by the venom duct.

Its subcellular location is the secreted. Neurotoxin with probable activity on sodium channel. Induces intense repetitive firing of the frog neuromuscular junction, leading to a tetanic contracture in muscle fiber (spastic paralysis). In vivo, shows the same effect as the whole venom when injected on fish prey. The protein is Conotoxin SIVB of Conus striatus (Striated cone).